Here is a 185-residue protein sequence, read N- to C-terminus: Ribosome hibernation promotion factor (185 aa).

Residues 1-125 (MIKFNIRGEN…PLDTTDEVAE (125 aa)) are probably still associates with ribosome. A required but not sufficient to restore ribosome dimerization, in vitro will replace E.coli RMF in ribosome dimerization region spans residues 126-185 (DHVDIVRTKHVALKPMDAEEAVLQMDMLGHDFYVFTDADSNGTHVVYRRTDGRYGLIETE).

The protein belongs to the HPF/YfiA ribosome-associated protein family. Long HPF subfamily. As to quaternary structure, interacts with 100S ribosomes in stationary phase; alters the relative position of the 30S and 50S subunits.

The protein localises to the cytoplasm. Required for dimerization of active 70S ribosomes into 100S ribosomes in stationary phase; 100S ribosomes are translationally inactive and sometimes present during exponential growth. Able to dimerize E.coli 70S ribosomes in vitro. The sequence is that of Ribosome hibernation promotion factor from Lactococcus lactis subsp. cremoris (strain MG1363).